The following is a 353-amino-acid chain: Photosystem II D2 protein (353 aa).

Position 2 is an N-acetylthreonine (threonine 2). The residue at position 2 (threonine 2) is a Phosphothreonine. Residues 41–61 (CAYFALGGWFTGTTFVTSWYT) traverse the membrane as a helical segment. Residue histidine 118 participates in chlorophyll a binding. Residues 125–141 (GFMLRQFELARSVQLRP) form a helical membrane-spanning segment. Glutamine 130 and asparagine 143 together coordinate pheophytin a. A helical transmembrane segment spans residues 153–166 (VFVSVFLIYPLGQS). A chlorophyll a-binding site is contributed by histidine 198. The chain crosses the membrane as a helical span at residues 208-228 (AALLCAIHGATVENTLFEDGD). Histidine 215 and phenylalanine 262 together coordinate a plastoquinone. Fe cation is bound at residue histidine 215. Position 269 (histidine 269) interacts with Fe cation. A helical transmembrane segment spans residues 279-295 (GLWMSALGVVGLALNLR).

It belongs to the reaction center PufL/M/PsbA/D family. In terms of assembly, PSII is composed of 1 copy each of membrane proteins PsbA, PsbB, PsbC, PsbD, PsbE, PsbF, PsbH, PsbI, PsbJ, PsbK, PsbL, PsbM, PsbT, PsbX, PsbY, PsbZ, Psb30/Ycf12, at least 3 peripheral proteins of the oxygen-evolving complex and a large number of cofactors. It forms dimeric complexes. The D1/D2 heterodimer binds P680, chlorophylls that are the primary electron donor of PSII, and subsequent electron acceptors. It shares a non-heme iron and each subunit binds pheophytin, quinone, additional chlorophylls, carotenoids and lipids. There is also a Cl(-1) ion associated with D1 and D2, which is required for oxygen evolution. The PSII complex binds additional chlorophylls, carotenoids and specific lipids. serves as cofactor.

The protein localises to the plastid. It is found in the chloroplast thylakoid membrane. It carries out the reaction 2 a plastoquinone + 4 hnu + 2 H2O = 2 a plastoquinol + O2. Functionally, photosystem II (PSII) is a light-driven water:plastoquinone oxidoreductase that uses light energy to abstract electrons from H(2)O, generating O(2) and a proton gradient subsequently used for ATP formation. It consists of a core antenna complex that captures photons, and an electron transfer chain that converts photonic excitation into a charge separation. The D1/D2 (PsbA/PsbD) reaction center heterodimer binds P680, the primary electron donor of PSII as well as several subsequent electron acceptors. D2 is needed for assembly of a stable PSII complex. In Dioscorea elephantipes (Elephant's foot yam), this protein is Photosystem II D2 protein.